Reading from the N-terminus, the 326-residue chain is MVVVGLDVGYGDTKVIGVDGKRIIFPSRWAVTETESWGIGGKIPVLSTDGGQTKFIYGKYASGNNIRVPQGDGRLASKEAFPLIAAALWESGIHNDGSPVDLVIGSGTPLGTFDLEVKAAKEALENKVLTVTGPEGEVRQFNITRLIMRPQGVGAALYLLNQGIIEQQPGYGVVIDVGSRTTDVLTINLMDMEPVVELSFSLQIGVGDAISALSRKIAKETGFVVPFDLAQEALSHPVMFRQKQVGGPEVSGPILEDLANRIIENIRLNLRGEVDRVTSLIPVGGGSNLIGDRFEEIAPGTLVKIKPEDLQFANALGYRDAAERSM.

ATP is bound by residues 10–14 (YGDTK), S179, Q231, 285–288 (GGSN), and Q311.

The protein belongs to the thermophilic archaeal actin family.

In terms of biological role, polymerizes into bundles of filaments, forming a helix with a filament width of 5.5 nm and an axial repeating unit of 5.5 nm. Polymerization of Ta0583 requires NTP and is optimal with ATP, but GTP, UTP, CTP, and even the deoxy form of NTP can also support the polymerization reaction. Nucleoside diphosphate or AMP-PNP does not support polymerization. The polypeptide is Archaeal actin homolog (Thermoplasma acidophilum (strain ATCC 25905 / DSM 1728 / JCM 9062 / NBRC 15155 / AMRC-C165)).